Reading from the N-terminus, the 291-residue chain is Shikimate dehydrogenase (NADP(+)) (291 aa).

Residues 18-20 (SLS) and Thr70 contribute to the shikimate site. The Proton acceptor role is filled by Lys74. Shikimate contacts are provided by Asn95 and Asp110. NADP(+) is bound by residues 134-138 (GAGGA) and Val228. Tyr230 provides a ligand contact to shikimate. An NADP(+)-binding site is contributed by Gly251.

The protein belongs to the shikimate dehydrogenase family. As to quaternary structure, homodimer.

It carries out the reaction shikimate + NADP(+) = 3-dehydroshikimate + NADPH + H(+). It participates in metabolic intermediate biosynthesis; chorismate biosynthesis; chorismate from D-erythrose 4-phosphate and phosphoenolpyruvate: step 4/7. Involved in the biosynthesis of the chorismate, which leads to the biosynthesis of aromatic amino acids. Catalyzes the reversible NADPH linked reduction of 3-dehydroshikimate (DHSA) to yield shikimate (SA). The protein is Shikimate dehydrogenase (NADP(+)) of Streptomyces avermitilis (strain ATCC 31267 / DSM 46492 / JCM 5070 / NBRC 14893 / NCIMB 12804 / NRRL 8165 / MA-4680).